The primary structure comprises 955 residues: Protein translocase subunit SecA (955 aa).

Residues glutamine 90, 108–112, and aspartate 509 each bind ATP; that span reads GEGKT. Positions 537 to 571 are disordered; sequence EGHRPPVPLQRSGAEGGGGFAAKAAPASGPHGHAP. Positions 557-571 are enriched in low complexity; that stretch reads AAKAAPASGPHGHAP.

The protein belongs to the SecA family. Monomer and homodimer. Part of the essential Sec protein translocation apparatus which comprises SecA, SecYEG and auxiliary proteins SecDF. Other proteins may also be involved.

It localises to the cell inner membrane. Its subcellular location is the cellular thylakoid membrane. The protein localises to the cytoplasm. The enzyme catalyses ATP + H2O + cellular proteinSide 1 = ADP + phosphate + cellular proteinSide 2.. In terms of biological role, part of the Sec protein translocase complex. Interacts with the SecYEG preprotein conducting channel. Has a central role in coupling the hydrolysis of ATP to the transfer of proteins into and across the cell membrane, serving as an ATP-driven molecular motor driving the stepwise translocation of polypeptide chains across the membrane. Functionally, probably participates in protein translocation into and across both the cytoplasmic and thylakoid membranes in cyanobacterial cells. In Synechococcus sp. (strain WH7803), this protein is Protein translocase subunit SecA.